We begin with the raw amino-acid sequence, 21 residues long: GVLDILKNAAKNILAHAAEQI.

The residue at position 21 (isoleucine 21) is an Isoleucine amide.

Expressed by the skin dorsal glands.

Its subcellular location is the secreted. In terms of biological role, has hemolytic activity against human erythrocytes and antibacterial activity against the Gram-negative bacterium E.coli. The polypeptide is Ocellatin-3 (Leptodactylus ocellatus (Argus frog)).